The following is a 259-amino-acid chain: 5'-nucleotidase SurE (259 aa).

Asp-8, Asp-9, Ser-41, and Asn-93 together coordinate a divalent metal cation.

It belongs to the SurE nucleotidase family. A divalent metal cation is required as a cofactor.

The protein localises to the cytoplasm. The enzyme catalyses a ribonucleoside 5'-phosphate + H2O = a ribonucleoside + phosphate. Functionally, nucleotidase that shows phosphatase activity on nucleoside 5'-monophosphates. The polypeptide is 5'-nucleotidase SurE (Verminephrobacter eiseniae (strain EF01-2)).